The chain runs to 281 residues: Bifunctional protein FolD (281 aa).

Residues 164 to 166 (GRS) and S189 contribute to the NADP(+) site.

Belongs to the tetrahydrofolate dehydrogenase/cyclohydrolase family. Homodimer.

It catalyses the reaction (6R)-5,10-methylene-5,6,7,8-tetrahydrofolate + NADP(+) = (6R)-5,10-methenyltetrahydrofolate + NADPH. It carries out the reaction (6R)-5,10-methenyltetrahydrofolate + H2O = (6R)-10-formyltetrahydrofolate + H(+). The protein operates within one-carbon metabolism; tetrahydrofolate interconversion. Its function is as follows. Catalyzes the oxidation of 5,10-methylenetetrahydrofolate to 5,10-methenyltetrahydrofolate and then the hydrolysis of 5,10-methenyltetrahydrofolate to 10-formyltetrahydrofolate. The sequence is that of Bifunctional protein FolD from Enterococcus faecalis (strain ATCC 700802 / V583).